Consider the following 662-residue polypeptide: UPF0313 protein CPR_1216 (662 aa).

Residues 296-567 (AIEEVKFSLV…AMQRALLQFK (272 aa)) form the Radical SAM core domain. [4Fe-4S] cluster-binding residues include Cys-310, Cys-314, and Cys-317. A disordered region spans residues 597-662 (RDKNSFGKGN…QRVSKGKKRR (66 aa)). The segment covering 618–632 (SRNENSGRRESEDKK) has biased composition (basic and acidic residues). The segment covering 633-644 (RSSHSKKQRGNK) has biased composition (basic residues).

The protein belongs to the UPF0313 family. The cofactor is [4Fe-4S] cluster.

This Clostridium perfringens (strain SM101 / Type A) protein is UPF0313 protein CPR_1216.